The sequence spans 2388 residues: Hybrid signal transduction histidine kinase M (2388 aa).

Disordered regions lie at residues 1-32 (MSNY…NNFN), 42-61 (FNTP…NSIS), 69-111 (NECN…STPI), 123-209 (NRSN…NAYP), 237-337 (TLLN…SPKL), 361-421 (SPHG…YNDN), 430-449 (TRNT…SSSF), and 486-542 (IYTP…NNNE). Residues 69–82 (NECNSGGEQSPKIK) are compositionally biased toward polar residues. Composition is skewed to low complexity over residues 83–110 (TNNN…KSTP), 125–206 (SNLN…SNSN), and 242–288 (SSNN…NNGG). Polar residues predominate over residues 293-306 (QFISSDNKYNTVGN). Positions 309–322 (HHHHHHQLHNHRHS) are enriched in basic residues. Low complexity-rich tracts occupy residues 325–337 (QGSS…SPKL), 361–399 (SPHG…NQNN), 410–419 (NNSNDSFDYN), and 432–449 (NTGY…SSSF). A compositionally biased stretch (pro residues) spans 489–505 (PPYPQPYPQPPQLPPPS). A compositionally biased stretch (low complexity) spans 506–541 (SSSSLSKENDNVDNNNTNNNNNNNNNNNNNNNNNNN). A run of 4 helical transmembrane segments spans residues 550–570 (TMNL…FLMV), 589–609 (FILI…LLVV), 645–665 (YIFL…NLFF), and 679–699 (NIST…SHIP). The disordered stretch occupies residues 732 to 888 (NNDNKNKIND…NNNEEDDEEE (157 aa)). Over residues 735-744 (NKNKINDKSD) the composition is skewed to basic and acidic residues. Residues 745 to 880 (NSNSITNNNN…NNNNNNNNNN (136 aa)) show a composition bias toward low complexity. Helical transmembrane passes span 896–916 (FQIF…LIVL), 953–973 (VQFQ…LLLV), and 1025–1045 (CSVG…WMSI). The region spanning 1093–1499 (RLVQNTGSII…VFELQVPMKC (407 aa)) is the Histidine kinase domain. Residues 1236-1257 (PIHHHRHHHRHHHHHHHHHHHH) show a composition bias toward basic residues. The disordered stretch occupies residues 1236 to 1410 (PIHHHRHHHR…INNNINNNNN (175 aa)). The span at 1260–1274 (DDDDYDDDNDDDNNT) shows a compositional bias: acidic residues. Positions 1286–1315 (LSDKIKDNQDENLELKKSNNDKIIENKENQ) are enriched in basic and acidic residues. The span at 1316–1410 (ENNNNNNNNN…INNNINNNNN (95 aa)) shows a compositional bias: low complexity. One can recognise a Response regulatory 1 domain in the interval 1541–1656 (KILVIDDNPN…QLTVLSQLLP (116 aa)). At D1592 the chain carries 4-aspartylphosphate. Disordered regions lie at residues 1666 to 1702 (SNQN…NIDF), 1960 to 2022 (GNNS…NSSN), 2036 to 2121 (CKGD…DIIN), 2133 to 2183 (QQQL…VKSS), and 2218 to 2256 (NQLN…NNND). Gly residues predominate over residues 1676-1696 (SNGGGGGGGGGGGGGGGGGSG). Residues 1974 to 1985 (TNNNTTTTTTTT) show a composition bias toward low complexity. Positions 1986–2010 (QPKKSPILTSSNGSDKSEGSTGSNR) are enriched in polar residues. Over residues 2054-2064 (DSSSSSSSSDS) the composition is skewed to low complexity. Positions 2065–2076 (HGQDDHSYRLED) are enriched in basic and acidic residues. Composition is skewed to low complexity over residues 2078–2109 (SISS…SGIN) and 2133–2165 (QQQL…LPIP). Residues 2169 to 2183 (INSSGASSGIKVKSS) are compositionally biased toward polar residues. In terms of domain architecture, Response regulatory 2 spans 2262 to 2383 (NILLVEDNLV…LLISLLKKLV (122 aa)). 4-aspartylphosphate is present on D2313.

Post-translationally, activation probably requires transfer of a phosphate group between a histidine in the kinase core (transmitter) domain and an aspartate of the receiver domain.

The protein resides in the membrane. It carries out the reaction ATP + protein L-histidine = ADP + protein N-phospho-L-histidine.. Its function is as follows. Acts as a receptor histidine kinase for a signal transduction pathway. This protein undergoes an ATP-dependent autophosphorylation at a conserved histidine residue in the kinase core, and a phosphoryl group is then transferred to a conserved aspartate residue in the receiver domain. This Dictyostelium discoideum (Social amoeba) protein is Hybrid signal transduction histidine kinase M (dhkM).